A 298-amino-acid chain; its full sequence is Oxygen-dependent coproporphyrinogen-III oxidase (298 aa).

Ser92 lines the substrate pocket. The a divalent metal cation site is built by His96 and His106. His106 (proton donor) is an active-site residue. 108 to 110 (NVR) is a substrate binding site. A divalent metal cation-binding residues include His145 and His175. Residues 239–274 (YVEFNLVYDRGTLFGLQSGGRSESILMSLPPRVRWE) form an important for dimerization region. 257 to 259 (GGR) is a binding site for substrate.

Belongs to the aerobic coproporphyrinogen-III oxidase family. As to quaternary structure, homodimer. A divalent metal cation is required as a cofactor.

Its subcellular location is the cytoplasm. It carries out the reaction coproporphyrinogen III + O2 + 2 H(+) = protoporphyrinogen IX + 2 CO2 + 2 H2O. It participates in porphyrin-containing compound metabolism; protoporphyrin-IX biosynthesis; protoporphyrinogen-IX from coproporphyrinogen-III (O2 route): step 1/1. In terms of biological role, involved in the heme biosynthesis. Catalyzes the aerobic oxidative decarboxylation of propionate groups of rings A and B of coproporphyrinogen-III to yield the vinyl groups in protoporphyrinogen-IX. In Stenotrophomonas maltophilia (strain R551-3), this protein is Oxygen-dependent coproporphyrinogen-III oxidase.